Here is a 318-residue protein sequence, read N- to C-terminus: Methionyl-tRNA formyltransferase (318 aa).

A (6S)-5,6,7,8-tetrahydrofolate-binding site is contributed by 112 to 115 (SILP).

It belongs to the Fmt family.

It catalyses the reaction L-methionyl-tRNA(fMet) + (6R)-10-formyltetrahydrofolate = N-formyl-L-methionyl-tRNA(fMet) + (6S)-5,6,7,8-tetrahydrofolate + H(+). Attaches a formyl group to the free amino group of methionyl-tRNA(fMet). The formyl group appears to play a dual role in the initiator identity of N-formylmethionyl-tRNA by promoting its recognition by IF2 and preventing the misappropriation of this tRNA by the elongation apparatus. This Shewanella baltica (strain OS185) protein is Methionyl-tRNA formyltransferase.